The sequence spans 187 residues: Ribonuclease HII (187 aa).

Residues 1 to 187 (MIILGIDEAG…YKPVQVLLNE (187 aa)) form the RNase H type-2 domain. 3 residues coordinate a divalent metal cation: D7, E8, and D99.

This sequence belongs to the RNase HII family. It depends on Mn(2+) as a cofactor. The cofactor is Mg(2+).

The protein resides in the cytoplasm. The catalysed reaction is Endonucleolytic cleavage to 5'-phosphomonoester.. Endonuclease that specifically degrades the RNA of RNA-DNA hybrids. The sequence is that of Ribonuclease HII from Francisella tularensis subsp. mediasiatica (strain FSC147).